Consider the following 197-residue polypeptide: Signal peptidase complex catalytic subunit SEC11 (197 aa).

Residues 1-14 lie on the Cytoplasmic side of the membrane; the sequence is MLSSLAPYMANPRQ. A helical; Signal-anchor for type II membrane protein membrane pass occupies residues 15 to 33; sequence TLTQVLNFALVLSTAFMLW. Over 34–197 the chain is Lumenal; it reads KGLSVITNST…MGLMVVLQRE (164 aa). N41 carries an N-linked (GlcNAc...) asparagine glycan. Catalysis depends on charge relay system residues S53 and H92. Residues 102 to 115 show a composition bias toward basic and acidic residues; sequence PGREDKKNVKKGGE. Residues 102-134 are disordered; that stretch reads PGREDKKNVKKGGEEGEETSSTPSQKLLTKGDN. The Charge relay system role is filled by D139. The interval 183–194 is C-terminal short (CTS) helix; that stretch reads VLLGFMGLMVVL.

This sequence belongs to the peptidase S26B family. Component of the signal peptidase complex (SPC) composed of a catalytic subunit SEC11 and three accessory subunits SPC1, SPC2 and SPC3. The complex induces a local thinning of the ER membrane which is used to measure the length of the signal peptide (SP) h-region of protein substrates. This ensures the selectivity of the complex towards h-regions shorter than 18-20 amino acids. SPC associates with the translocon complex.

It localises to the endoplasmic reticulum membrane. It catalyses the reaction Cleavage of hydrophobic, N-terminal signal or leader sequences from secreted and periplasmic proteins.. Its function is as follows. Catalytic component of the signal peptidase complex (SPC) which catalyzes the cleavage of N-terminal signal sequences from nascent proteins as they are translocated into the lumen of the endoplasmic reticulum. Specifically cleaves N-terminal signal peptides that contain a hydrophobic alpha-helix (h-region) shorter than 18-20 amino acids. In Paracoccidioides brasiliensis (strain Pb18), this protein is Signal peptidase complex catalytic subunit SEC11 (SEC11).